We begin with the raw amino-acid sequence, 371 residues long: 4-hydroxy-3-methylbut-2-en-1-yl diphosphate synthase (flavodoxin) (371 aa).

Positions 270, 273, 305, and 312 each coordinate [4Fe-4S] cluster.

The protein belongs to the IspG family. Requires [4Fe-4S] cluster as cofactor.

The catalysed reaction is (2E)-4-hydroxy-3-methylbut-2-enyl diphosphate + oxidized [flavodoxin] + H2O + 2 H(+) = 2-C-methyl-D-erythritol 2,4-cyclic diphosphate + reduced [flavodoxin]. The protein operates within isoprenoid biosynthesis; isopentenyl diphosphate biosynthesis via DXP pathway; isopentenyl diphosphate from 1-deoxy-D-xylulose 5-phosphate: step 5/6. Functionally, converts 2C-methyl-D-erythritol 2,4-cyclodiphosphate (ME-2,4cPP) into 1-hydroxy-2-methyl-2-(E)-butenyl 4-diphosphate. The sequence is that of 4-hydroxy-3-methylbut-2-en-1-yl diphosphate synthase (flavodoxin) from Shewanella pealeana (strain ATCC 700345 / ANG-SQ1).